The sequence spans 259 residues: 3-methyl-2-oxobutanoate hydroxymethyltransferase (259 aa).

Aspartate 44 and aspartate 83 together coordinate Mg(2+). 3-methyl-2-oxobutanoate is bound by residues 44–45 (DS), aspartate 83, and lysine 112. Glutamate 114 contacts Mg(2+). Residue glutamate 177 is the Proton acceptor of the active site.

It belongs to the PanB family. As to quaternary structure, homodecamer; pentamer of dimers. It depends on Mg(2+) as a cofactor.

The protein resides in the cytoplasm. The enzyme catalyses 3-methyl-2-oxobutanoate + (6R)-5,10-methylene-5,6,7,8-tetrahydrofolate + H2O = 2-dehydropantoate + (6S)-5,6,7,8-tetrahydrofolate. It functions in the pathway cofactor biosynthesis; (R)-pantothenate biosynthesis; (R)-pantoate from 3-methyl-2-oxobutanoate: step 1/2. Functionally, catalyzes the reversible reaction in which hydroxymethyl group from 5,10-methylenetetrahydrofolate is transferred onto alpha-ketoisovalerate to form ketopantoate. This is 3-methyl-2-oxobutanoate hydroxymethyltransferase from Nitratiruptor sp. (strain SB155-2).